A 116-amino-acid chain; its full sequence is NADH-ubiquinone oxidoreductase chain 3 (116 aa).

3 consecutive transmembrane segments (helical) span residues 8–28 (VVAT…LPSL), 56–76 (FFLI…LLPL), and 88–108 (TLLW…YEWF).

It belongs to the complex I subunit 3 family.

It localises to the mitochondrion membrane. The catalysed reaction is a ubiquinone + NADH + 5 H(+)(in) = a ubiquinol + NAD(+) + 4 H(+)(out). Core subunit of the mitochondrial membrane respiratory chain NADH dehydrogenase (Complex I) that is believed to belong to the minimal assembly required for catalysis. Complex I functions in the transfer of electrons from NADH to the respiratory chain. The immediate electron acceptor for the enzyme is believed to be ubiquinone. The polypeptide is NADH-ubiquinone oxidoreductase chain 3 (MT-ND3) (Scyliorhinus canicula (Small-spotted catshark)).